The sequence spans 590 residues: G protein-coupled receptor kinase 5 (590 aa).

Positions 1–185 are N-terminal; the sequence is MELENIVANT…LERQPVTKNT (185 aa). The tract at residues 20-39 is interaction with calmodulin; sequence GGKRKGKSKKWKEILKFPHI. Positions 53–171 constitute an RGS domain; it reads YCSLCDKQPI…LDSMFFDRFL (119 aa). The 263-residue stretch at 186-448 folds into the Protein kinase domain; that stretch reads FRQYRVLGKG…AAEVKRHPFF (263 aa). ATP contacts are provided by residues 192–200 and lysine 215; that span reads LGKGGFGEV. Aspartate 311 acts as the Proton acceptor in catalysis. The short motif at 388 to 395 is the Nuclear localization signal element; it reads RKEKVKRE. One can recognise an AGC-kinase C-terminal domain in the interval 449–514; that stretch reads RNMNFKRLEA…GSVSIPWQNE (66 aa). A Phosphoserine; by autocatalysis modification is found at serine 484. Phosphothreonine; by autocatalysis is present on threonine 485. Residues 531 to 590 form a disordered region; the sequence is GTLPPDLNRNHPPEPPKKGLLQRLFKRQHQNNSKSSPSSKTSFNHHINSNHVSSNSTGSS. The segment covering 538 to 547 has biased composition (basic and acidic residues); sequence NRNHPPEPPK. The segment at 546 to 565 is sufficient for membrane localization; sequence PKKGLLQRLFKRQHQNNSKS. Residues 563–590 show a composition bias toward low complexity; sequence SKSSPSSKTSFNHHINSNHVSSNSTGSS. Residue serine 579 is modified to Phosphoserine.

Belongs to the protein kinase superfamily. AGC Ser/Thr protein kinase family. GPRK subfamily. In terms of assembly, interacts with ST13 (via the C-terminus 303-319 AA). Interacts with TP53/p53. Interacts with HTR4 (via C-terminus 330-346 AA); this interaction is promoted by 5-HT (serotonin). Interacts with HDAC5. Interacts with GIT1. In terms of processing, autophosphorylated. Autophosphorylation may play a critical role in the regulation of GRK5 kinase activity. Highest levels in heart, placenta, lung &gt; skeletal muscle &gt; brain, liver, pancreas &gt; kidney.

It localises to the cytoplasm. The protein localises to the nucleus. The protein resides in the cell membrane. The enzyme catalyses [G-protein-coupled receptor] + ATP = [G-protein-coupled receptor]-phosphate + ADP + H(+). With respect to regulation, inhibited by calmodulin with an IC(50) of 50 nM. Calmodulin inhibits GRK5 association with receptor and phospholipid. Serine/threonine kinase that phosphorylates preferentially the activated forms of a variety of G-protein-coupled receptors (GPCRs). Such receptor phosphorylation initiates beta-arrestin-mediated receptor desensitization, internalization, and signaling events leading to their down-regulation. Phosphorylates a variety of GPCRs, including adrenergic receptors, muscarinic acetylcholine receptors (more specifically Gi-coupled M2/M4 subtypes), dopamine receptors and opioid receptors. In addition to GPCRs, also phosphorylates various substrates: Hsc70-interacting protein/ST13, TP53/p53, HDAC5, and arrestin-1/ARRB1. Phosphorylation of ARRB1 by GRK5 inhibits G-protein independent MAPK1/MAPK3 signaling downstream of 5HT4-receptors. Phosphorylation of HDAC5, a repressor of myocyte enhancer factor 2 (MEF2) leading to nuclear export of HDAC5 and allowing MEF2-mediated transcription. Phosphorylation of TP53/p53, a crucial tumor suppressor, inhibits TP53/p53-mediated apoptosis. Phosphorylation of ST13 regulates internalization of the chemokine receptor. Phosphorylates rhodopsin (RHO) (in vitro) and a non G-protein-coupled receptor, LRP6 during Wnt signaling (in vitro). The chain is G protein-coupled receptor kinase 5 (GRK5) from Homo sapiens (Human).